Here is a 751-residue protein sequence, read N- to C-terminus: Zinc finger protein 184 (751 aa).

A KRAB domain is found at 28-99 (VTFKDVIVDF…EPSIPVGTCA (72 aa)). Residues Ser117, Ser122, and Ser199 each carry the phosphoserine modification. Over residues 191–202 (SNLVTQEPSPEE) the composition is skewed to polar residues. The interval 191 to 212 (SNLVTQEPSPEETSTKRSIKQN) is disordered. Lys206 participates in a covalent cross-link: Glycyl lysine isopeptide (Lys-Gly) (interchain with G-Cter in SUMO2). 19 C2H2-type zinc fingers span residues 222–244 (CKCN…QRTH), 250–272 (YKCN…QRIH), 278–300 (YKCD…QRIH), 306–328 (YKCD…QRIH), 334–356 (YTCN…QKIH), 362–384 (FKCD…QKIH), 390–412 (YKCN…HMIH), 418–440 (YECN…QKTH), 446–468 (YDCA…LKIH), 474–496 (YKCN…RRIH), 502–524 (FECS…QKTH), 530–552 (YECK…ERIH), 558–580 (YQCH…RKIH), 586–608 (YKCN…KRIH), 614–636 (YECA…QKTH), 642–664 (YQCN…QRIH), 670–692 (YKCN…QNTH), 698–720 (YNCN…QRIH), and 726–748 (FGCN…QRLH).

This sequence belongs to the krueppel C2H2-type zinc-finger protein family. As to expression, predominant expression in testis.

The protein localises to the nucleus. In terms of biological role, may be involved in transcriptional regulation. In Homo sapiens (Human), this protein is Zinc finger protein 184 (ZNF184).